The chain runs to 179 residues: tRNA-splicing endonuclease (179 aa).

Catalysis depends on residues Tyr-115, His-125, and Lys-156.

It belongs to the tRNA-intron endonuclease family. Archaeal short subfamily. In terms of assembly, homotetramer; although the tetramer contains four active sites, only two participate in the cleavage. Therefore, it should be considered as a dimer of dimers.

It catalyses the reaction pretRNA = a 3'-half-tRNA molecule with a 5'-OH end + a 5'-half-tRNA molecule with a 2',3'-cyclic phosphate end + an intron with a 2',3'-cyclic phosphate and a 5'-hydroxyl terminus.. Its function is as follows. Endonuclease that removes tRNA introns. Cleaves pre-tRNA at the 5'- and 3'-splice sites to release the intron. The products are an intron and two tRNA half-molecules bearing 2',3' cyclic phosphate and 5'-OH termini. Recognizes a pseudosymmetric substrate in which 2 bulged loops of 3 bases are separated by a stem of 4 bp. The sequence is that of tRNA-splicing endonuclease (endA) from Methanocaldococcus jannaschii (strain ATCC 43067 / DSM 2661 / JAL-1 / JCM 10045 / NBRC 100440) (Methanococcus jannaschii).